The chain runs to 938 residues: Isoleucine--tRNA ligase (938 aa).

Positions 58 to 68 match the 'HIGH' region motif; it reads PYANGSIHIGH. Residue glutamate 561 coordinates L-isoleucyl-5'-AMP. The 'KMSKS' region motif lies at 602–606; it reads KMSKS. Lysine 605 serves as a coordination point for ATP. Zn(2+) contacts are provided by cysteine 901, cysteine 904, cysteine 921, and cysteine 924.

Belongs to the class-I aminoacyl-tRNA synthetase family. IleS type 1 subfamily. As to quaternary structure, monomer. It depends on Zn(2+) as a cofactor.

It is found in the cytoplasm. The enzyme catalyses tRNA(Ile) + L-isoleucine + ATP = L-isoleucyl-tRNA(Ile) + AMP + diphosphate. In terms of biological role, catalyzes the attachment of isoleucine to tRNA(Ile). As IleRS can inadvertently accommodate and process structurally similar amino acids such as valine, to avoid such errors it has two additional distinct tRNA(Ile)-dependent editing activities. One activity is designated as 'pretransfer' editing and involves the hydrolysis of activated Val-AMP. The other activity is designated 'posttransfer' editing and involves deacylation of mischarged Val-tRNA(Ile). The polypeptide is Isoleucine--tRNA ligase (Erwinia tasmaniensis (strain DSM 17950 / CFBP 7177 / CIP 109463 / NCPPB 4357 / Et1/99)).